The chain runs to 596 residues: Malto-oligosyltrehalose trehalohydrolase (596 aa).

Residue 263–268 (RLDAVH) participates in substrate binding. Asp265 functions as the Nucleophile in the catalytic mechanism. The active-site Proton donor is Glu302. Substrate contacts are provided by residues 327–331 (DDFHH) and 397–402 (HDQIGN).

The protein belongs to the glycosyl hydrolase 13 family.

Its subcellular location is the cytoplasm. The enzyme catalyses hydrolysis of (1-&gt;4)-alpha-D-glucosidic linkage in 4-alpha-D-[(1-&gt;4)-alpha-D-glucanosyl]n trehalose to yield trehalose and (1-&gt;4)-alpha-D-glucan.. The protein operates within glycan biosynthesis; trehalose biosynthesis. This Rhizobium sp. (strain M-11) protein is Malto-oligosyltrehalose trehalohydrolase (treZ).